Here is a 293-residue protein sequence, read N- to C-terminus: uncharacterized protein (293 aa).

2 disordered regions span residues 121–154 (NLNFDPHQMSKPSYHHHSHSHSHHSHSHSHSQNS) and 254–274 (DILQTVPPSPTPTPPPPPQQQ). Positions 133-149 (SYHHHSHSHSHHSHSHS) are enriched in basic residues. The span at 260–272 (PPSPTPTPPPPPQ) shows a compositional bias: pro residues.

This is an uncharacterized protein from Dictyostelium discoideum (Social amoeba).